The following is an 88-amino-acid chain: MKTVLIALLRFYKVAVSPMLGDRCRFYPSCSDYAREAIQYHGAARGTYLAVRRVCRCHPFSAGGIDLVPPPNSDIRARGEADARSHRL.

It belongs to the UPF0161 family.

It is found in the cell inner membrane. Functionally, could be involved in insertion of integral membrane proteins into the membrane. In Burkholderia vietnamiensis (strain G4 / LMG 22486) (Burkholderia cepacia (strain R1808)), this protein is Putative membrane protein insertion efficiency factor.